Here is a 510-residue protein sequence, read N- to C-terminus: 2,3-bisphosphoglycerate-independent phosphoglycerate mutase (510 aa).

Mn(2+)-binding residues include Asp-13 and Ser-63. The active-site Phosphoserine intermediate is the Ser-63. Substrate is bound by residues His-124, 154 to 155 (RD), Arg-186, Arg-192, 262 to 265 (RADR), and Lys-334. Mn(2+) is bound by residues Asp-401, His-405, Asp-442, His-443, and His-461.

The protein belongs to the BPG-independent phosphoglycerate mutase family. As to quaternary structure, monomer. The cofactor is Mn(2+).

The enzyme catalyses (2R)-2-phosphoglycerate = (2R)-3-phosphoglycerate. It participates in carbohydrate degradation; glycolysis; pyruvate from D-glyceraldehyde 3-phosphate: step 3/5. Functionally, catalyzes the interconversion of 2-phosphoglycerate and 3-phosphoglycerate. In Aliivibrio fischeri (strain ATCC 700601 / ES114) (Vibrio fischeri), this protein is 2,3-bisphosphoglycerate-independent phosphoglycerate mutase.